Consider the following 585-residue polypeptide: MSGILKRKFEEVDGSSPCSSVRESDDEVSSSESADSGDSVNPSTSSHFTPSSILKREKRLRTKNVHFSCVTVYYFTRRQGFTSVPSQGGSTLGMSSRHNSVRQYTLGEFAREQERLHREMLREHLREEKLNSLKLKMTKNGTVESEEASTLTLDDISDDDIDLDNTEVDEYFFLQPLPTKKRRALLRASGVKKIDVEEKHELRAIRLSREDCGCDCRVFCDPDTCTCSLAGIKCQVDRMSFPCGCTKEGCSNTAGRIEFNPIRVRTHFLHTIMKLELEKNREQQIPTLNGCHSEISAHSSSMGPVAHSVEYSIADSFEIETEPQAAVLHLQSAEELDCQGEEEEEEEDGSSFCSGVTDSSTQSLAPSESDEEEEEEEEEEEEEDDDDDKGDGFVEGLGTHAEVVPLPSVLCYSDGTAVHESHAKNASFYANSSTLYYQIDSHIPGTPNQISENYSERDTVKNGTLSLVPYTMTPEQFVDYARQAEEAYGASHYPAANPSVIVCCSSSENDSGVPCNSLYPEHRSNHPQVEFHSYLKGPSQEGFVSALNGDSHISEHPAENSLSLAEKSILHEECIKSPVVETVPV.

Disordered regions lie at residues 1 to 52 (MSGI…TPSS) and 335 to 395 (ELDC…GFVE). Residues 30-40 (SSESADSGDSV) show a composition bias toward low complexity. Positions 41–52 (NPSTSSHFTPSS) are enriched in polar residues. A compositionally biased stretch (acidic residues) spans 335-349 (ELDCQGEEEEEEEDG). A compositionally biased stretch (polar residues) spans 351 to 366 (SFCSGVTDSSTQSLAP). Positions 368–389 (ESDEEEEEEEEEEEEEDDDDDK) are enriched in acidic residues.

Belongs to the AXUD1 family.

Its subcellular location is the nucleus. Functionally, binds to the consensus sequence 5'-AGAGTG-3' and has transcriptional activator activity. Plays a role in apoptosis. The chain is Cysteine/serine-rich nuclear protein 3 (CSRNP3) from Homo sapiens (Human).